A 278-amino-acid chain; its full sequence is Putative phosphoenolpyruvate synthase regulatory protein (278 aa).

158 to 165 (GVSRSGKT) contributes to the ADP binding site.

The protein belongs to the pyruvate, phosphate/water dikinase regulatory protein family. PSRP subfamily.

The enzyme catalyses [pyruvate, water dikinase] + ADP = [pyruvate, water dikinase]-phosphate + AMP + H(+). It carries out the reaction [pyruvate, water dikinase]-phosphate + phosphate + H(+) = [pyruvate, water dikinase] + diphosphate. Its function is as follows. Bifunctional serine/threonine kinase and phosphorylase involved in the regulation of the phosphoenolpyruvate synthase (PEPS) by catalyzing its phosphorylation/dephosphorylation. The polypeptide is Putative phosphoenolpyruvate synthase regulatory protein (Acinetobacter baylyi (strain ATCC 33305 / BD413 / ADP1)).